We begin with the raw amino-acid sequence, 274 residues long: Large ribosomal subunit protein uL2cz/uL2cy (274 aa).

Disordered regions lie at residues 1 to 23 (MAIH…SQVK) and 223 to 274 (MNPV…RRSK). Over residues 7–23 (KTSTPSTRNGTVGSQVK) the composition is skewed to polar residues.

Belongs to the universal ribosomal protein uL2 family. In terms of assembly, part of the 50S ribosomal subunit.

It localises to the plastid. The protein resides in the chloroplast. The chain is Large ribosomal subunit protein uL2cz/uL2cy (rpl2-A) from Nandina domestica (Heavenly bamboo).